A 484-amino-acid chain; its full sequence is tRNA sulfurtransferase (484 aa).

A THUMP domain is found at 63 to 167 (QAFGERLACI…GDKLYMVTKR (105 aa)). Residues 185 to 186 (LI), lysine 267, glycine 289, and glutamine 298 each bind ATP. A disulfide bond links cysteine 346 and cysteine 458. The 79-residue stretch at 406-484 (IDTNEVVIDI…GYHNVKVYRP (79 aa)) folds into the Rhodanese domain. The active-site Cysteine persulfide intermediate is cysteine 458.

The protein belongs to the ThiI family.

It localises to the cytoplasm. The catalysed reaction is [ThiI sulfur-carrier protein]-S-sulfanyl-L-cysteine + a uridine in tRNA + 2 reduced [2Fe-2S]-[ferredoxin] + ATP + H(+) = [ThiI sulfur-carrier protein]-L-cysteine + a 4-thiouridine in tRNA + 2 oxidized [2Fe-2S]-[ferredoxin] + AMP + diphosphate. It carries out the reaction [ThiS sulfur-carrier protein]-C-terminal Gly-Gly-AMP + S-sulfanyl-L-cysteinyl-[cysteine desulfurase] + AH2 = [ThiS sulfur-carrier protein]-C-terminal-Gly-aminoethanethioate + L-cysteinyl-[cysteine desulfurase] + A + AMP + 2 H(+). The protein operates within cofactor biosynthesis; thiamine diphosphate biosynthesis. Its function is as follows. Catalyzes the ATP-dependent transfer of a sulfur to tRNA to produce 4-thiouridine in position 8 of tRNAs, which functions as a near-UV photosensor. Also catalyzes the transfer of sulfur to the sulfur carrier protein ThiS, forming ThiS-thiocarboxylate. This is a step in the synthesis of thiazole, in the thiamine biosynthesis pathway. The sulfur is donated as persulfide by IscS. The chain is tRNA sulfurtransferase from Shewanella sp. (strain MR-4).